Consider the following 433-residue polypeptide: Ribosomal protein uS12 methylthiotransferase RimO (433 aa).

An MTTase N-terminal domain is found at 6–122; the sequence is QSIFLLSLGC…IISVLGGSYR (117 aa). Positions 15, 51, 85, 146, 150, and 153 each coordinate [4Fe-4S] cluster. One can recognise a Radical SAM core domain in the interval 132 to 362; that stretch reads LTPPHYAWLK…MELQESIAAE (231 aa). The TRAM domain maps to 365–432; the sequence is RELEGRVMKV…AYELHGRVND (68 aa).

It belongs to the methylthiotransferase family. RimO subfamily. [4Fe-4S] cluster serves as cofactor.

It is found in the cytoplasm. It carries out the reaction L-aspartate(89)-[ribosomal protein uS12]-hydrogen + (sulfur carrier)-SH + AH2 + 2 S-adenosyl-L-methionine = 3-methylsulfanyl-L-aspartate(89)-[ribosomal protein uS12]-hydrogen + (sulfur carrier)-H + 5'-deoxyadenosine + L-methionine + A + S-adenosyl-L-homocysteine + 2 H(+). In terms of biological role, catalyzes the methylthiolation of an aspartic acid residue of ribosomal protein uS12. The protein is Ribosomal protein uS12 methylthiotransferase RimO of Prosthecochloris aestuarii (strain DSM 271 / SK 413).